The chain runs to 377 residues: Putative F-box protein At1g70380 (377 aa).

An F-box domain is found at 3–48 (NTSFETLALDMQIEILARLPLKYLMRCMCVSKKWASLIRGEDFRSA).

The protein is Putative F-box protein At1g70380 of Arabidopsis thaliana (Mouse-ear cress).